The sequence spans 433 residues: Tol-Pal system protein TolB (433 aa).

The signal sequence occupies residues 1 to 21; it reads MIKRLRGLLVLLCCVAGMAMA.

The protein belongs to the TolB family. In terms of assembly, the Tol-Pal system is composed of five core proteins: the inner membrane proteins TolA, TolQ and TolR, the periplasmic protein TolB and the outer membrane protein Pal. They form a network linking the inner and outer membranes and the peptidoglycan layer.

The protein resides in the periplasm. Its function is as follows. Part of the Tol-Pal system, which plays a role in outer membrane invagination during cell division and is important for maintaining outer membrane integrity. This Pseudomonas entomophila (strain L48) protein is Tol-Pal system protein TolB.